A 160-amino-acid polypeptide reads, in one-letter code: SsrA-binding protein (160 aa).

It belongs to the SmpB family.

The protein resides in the cytoplasm. Its function is as follows. Required for rescue of stalled ribosomes mediated by trans-translation. Binds to transfer-messenger RNA (tmRNA), required for stable association of tmRNA with ribosomes. tmRNA and SmpB together mimic tRNA shape, replacing the anticodon stem-loop with SmpB. tmRNA is encoded by the ssrA gene; the 2 termini fold to resemble tRNA(Ala) and it encodes a 'tag peptide', a short internal open reading frame. During trans-translation Ala-aminoacylated tmRNA acts like a tRNA, entering the A-site of stalled ribosomes, displacing the stalled mRNA. The ribosome then switches to translate the ORF on the tmRNA; the nascent peptide is terminated with the 'tag peptide' encoded by the tmRNA and targeted for degradation. The ribosome is freed to recommence translation, which seems to be the essential function of trans-translation. The polypeptide is SsrA-binding protein (Cronobacter sakazakii (strain ATCC BAA-894) (Enterobacter sakazakii)).